We begin with the raw amino-acid sequence, 848 residues long: Neuroligin-3 (848 aa).

The signal sequence occupies residues 1–37 (MWLRLGPPSLSLSPKPTVGRSLCLTLWFLSLALRAST). Topologically, residues 38–709 (QAPAPTVNTH…NPRDYSTELS (672 aa)) are extracellular. N98 carries an N-linked (GlcNAc...) asparagine glycan. C106 and C141 are joined by a disulfide. The interval 170–195 (RKGGSGAKKQGEDLADNDGDEDEDIR) is disordered. Over residues 182–194 (DLADNDGDEDEDI) the composition is skewed to acidic residues. 2 disulfides stabilise this stretch: C340–C351 and C510–C544. N545 carries an N-linked (GlcNAc...) asparagine glycan. 2 stretches are compositionally biased toward polar residues: residues 645 to 656 (TKVPPPDTTHSS) and 677 to 689 (AYSNENAQGSWNG). A disordered region spans residues 645–694 (TKVPPPDTTHSSHITRRPNGKTWSTKRPAISPAYSNENAQGSWNGDQDAG). A helical membrane pass occupies residues 710–730 (VTIAVGASLLFLNVLAFAALY). At 731-848 (YRKDKRRQEP…LPHSHSTTRV (118 aa)) the chain is on the cytoplasmic side. Position 745 is a phosphoserine (S745). Y792 carries the phosphotyrosine modification.

Belongs to the type-B carboxylesterase/lipase family. Homodimer, and heterodimer with NLGN1 and NLGN2. Interacts with neurexins NRXN1, NRXN2 and NRXN3. Interaction with neurexins is mediated by heparan sulfate glycan modification on neurexin. Interacts (via its C-terminus) with DLG4/PSD-95 (via PDZ domain 3). In terms of tissue distribution, expressed in the blood vessel walls (at protein level). Detected in throughout the brain and in spinal cord. Detected in brain, and at lower levels in pancreas islet beta cells.

Its subcellular location is the cell membrane. It localises to the synapse. Its function is as follows. Cell surface protein involved in cell-cell-interactions via its interactions with neurexin family members. Plays a role in synapse function and synaptic signal transmission, and may mediate its effects by clustering other synaptic proteins. May promote the initial formation of synapses, but is not essential for this. May also play a role in glia-glia or glia-neuron interactions in the developing peripheral nervous system. This is Neuroligin-3 (NLGN3) from Homo sapiens (Human).